Reading from the N-terminus, the 207-residue chain is Large ribosomal subunit protein bL25 (207 aa).

The segment at 1 to 20 (MANHQIKAQRRKDEGKGASR) is disordered.

It belongs to the bacterial ribosomal protein bL25 family. CTC subfamily. In terms of assembly, part of the 50S ribosomal subunit; part of the 5S rRNA/L5/L18/L25 subcomplex. Contacts the 5S rRNA. Binds to the 5S rRNA independently of L5 and L18.

Functionally, this is one of the proteins that binds to the 5S RNA in the ribosome where it forms part of the central protuberance. This is Large ribosomal subunit protein bL25 from Xylella fastidiosa (strain M12).